We begin with the raw amino-acid sequence, 503 residues long: 2-phosphoxylose phosphatase 1 (503 aa).

Over 1 to 6 the chain is Cytoplasmic; the sequence is MLARSR. Residues 7 to 27 form a helical; Signal-anchor for type II membrane protein membrane-spanning segment; it reads FILVLVVGALLAVLSFSLQYL. Residues 28–503 are Lumenal-facing; that stretch reads HLIPTNPVAE…YQQACHQTVL (476 aa). A disordered region spans residues 38–63; the sequence is QRSAGRSRKRVNPVLHTDPPAPDPIR. N-linked (GlcNAc...) asparagine glycosylation occurs at N73. H98 functions as the Nucleophile in the catalytic mechanism. The N-linked (GlcNAc...) asparagine glycan is linked to N365. The active-site Proton donor is D396. Residue N490 is glycosylated (N-linked (GlcNAc...) asparagine).

Belongs to the histidine acid phosphatase family.

The protein resides in the golgi apparatus membrane. The catalysed reaction is 3-O-[beta-D-GlcA-(1-&gt;3)-beta-D-Gal-(1-&gt;3)-beta-D-Gal-(1-&gt;4)-beta-D-2-O-P-Xyl]-L-seryl-[protein] + H2O = 3-O-(beta-D-GlcA-(1-&gt;3)-beta-D-Gal-(1-&gt;3)-beta-D-Gal-(1-&gt;4)-beta-D-Xyl)-L-seryl-[protein] + phosphate. Responsible for the 2-O-dephosphorylation of xylose in the glycosaminoglycan-protein linkage region of proteoglycans thereby regulating the amount of mature glycosaminoglycan (GAG) chains. Sulfated glycosaminoglycans (GAGs), including heparan sulfate and chondroitin sulfate, are synthesized on the so-called common GAG-protein linkage region (GlcUAbeta1-3Galbeta1-3Galbeta1-4Xylbeta1-O-Ser) of core proteins, which is formed by the stepwise addition of monosaccharide residues by the respective specific glycosyltransferases. The sequence is that of 2-phosphoxylose phosphatase 1 from Danio rerio (Zebrafish).